The sequence spans 342 residues: NADH-quinone oxidoreductase subunit H (342 aa).

8 consecutive transmembrane segments (helical) span residues 15 to 35 (LLII…LMVA), 86 to 106 (VLFI…WAVV), 119 to 139 (VGVL…IIAG), 159 to 179 (VSYE…VGSL), 190 to 210 (HVWF…SGLA), 251 to 271 (FMIC…PFDI), 277 to 297 (VPGP…FFWV), and 316 to 336 (VFLP…ELAG).

Belongs to the complex I subunit 1 family. As to quaternary structure, NDH-1 is composed of 14 different subunits. Subunits NuoA, H, J, K, L, M, N constitute the membrane sector of the complex.

The protein localises to the cell inner membrane. The catalysed reaction is a quinone + NADH + 5 H(+)(in) = a quinol + NAD(+) + 4 H(+)(out). NDH-1 shuttles electrons from NADH, via FMN and iron-sulfur (Fe-S) centers, to quinones in the respiratory chain. The immediate electron acceptor for the enzyme in this species is believed to be ubiquinone. Couples the redox reaction to proton translocation (for every two electrons transferred, four hydrogen ions are translocated across the cytoplasmic membrane), and thus conserves the redox energy in a proton gradient. This subunit may bind ubiquinone. The polypeptide is NADH-quinone oxidoreductase subunit H (Granulibacter bethesdensis (strain ATCC BAA-1260 / CGDNIH1)).